A 473-amino-acid chain; its full sequence is Ribulose bisphosphate carboxylase large chain (473 aa).

Positions 116 and 166 each coordinate substrate. The active-site Proton acceptor is lysine 168. Lysine 170 is a binding site for substrate. Mg(2+) contacts are provided by lysine 194, aspartate 196, and glutamate 197. At lysine 194 the chain carries N6-carboxylysine. Histidine 287 (proton acceptor) is an active-site residue. The substrate site is built by arginine 288, histidine 320, and serine 372.

It belongs to the RuBisCO large chain family. Type I subfamily. In terms of assembly, heterohexadecamer of 8 large chains and 8 small chains. Mg(2+) is required as a cofactor.

It carries out the reaction 2 (2R)-3-phosphoglycerate + 2 H(+) = D-ribulose 1,5-bisphosphate + CO2 + H2O. The enzyme catalyses D-ribulose 1,5-bisphosphate + O2 = 2-phosphoglycolate + (2R)-3-phosphoglycerate + 2 H(+). RuBisCO catalyzes two reactions: the carboxylation of D-ribulose 1,5-bisphosphate, the primary event in carbon dioxide fixation, as well as the oxidative fragmentation of the pentose substrate. Both reactions occur simultaneously and in competition at the same active site. This Nitrosomonas eutropha (strain DSM 101675 / C91 / Nm57) protein is Ribulose bisphosphate carboxylase large chain.